The sequence spans 308 residues: Ceramide synthase 1 LOH3 (308 aa).

The next 6 membrane-spanning stretches (helical) occupy residues 25–45 (VLPLFAVFFPSIRFLLDRFVF), 82–102 (CVYYLSAEILALSVTYNEPWF), 128–148 (LLYMFVAGFYTYSIFALVFWE), 154–174 (FGVSMGHHIATLILIVLSYVC), 213–233 (FILFVLSWIILRLIYYPFWIL), and 258–278 (YMFNTLLYCLLVLHIYWWVLM). The region spanning 73-287 (RKFKESAWKC…MYRMLVKQIQ (215 aa)) is the TLC domain. Phosphoserine occurs at positions 298 and 300.

In terms of tissue distribution, expressed ubiquitously at low levels. Not observed in pollen.

It localises to the endoplasmic reticulum membrane. It catalyses the reaction (4R)-hydroxysphinganine + a fatty acyl-CoA = an N-acyl-(4R)-4-hydroxysphinganine + CoA + H(+). The enzyme catalyses a sphingoid base + tetracosanoyl-CoA = an N-tetracosanoyl-sphingoid base + CoA + H(+). It carries out the reaction (4R)-hydroxysphinganine + hexadecanoyl-CoA = N-hexadecanoyl-(4R)-hydroxysphinganine + CoA + H(+). The catalysed reaction is (4R)-hydroxysphinganine + octadecanoyl-CoA = N-octadecanoyl-(4R)-hydroxysphinganine + CoA + H(+). It catalyses the reaction (4R)-hydroxysphinganine + eicosanoyl-CoA = N-eicosanoyl-(4R)-hydroxysphinganine + CoA + H(+). The enzyme catalyses docosanoyl-CoA + (4R)-hydroxysphinganine = N-docosanoyl-(4R)-hydroxysphinganine + CoA + H(+). It carries out the reaction hexacosanoyl-CoA + (4R)-hydroxysphinganine = N-hexacosanoyl-(4R)-hydroxysphinganine + CoA + H(+). The catalysed reaction is tetracosanoyl-CoA + (4R)-hydroxysphinganine = N-tetracosanoyl-(4R)-hydroxysphinganine + CoA + H(+). It catalyses the reaction tetracosanoyl-CoA + sphing-4-enine = N-tetracosanoyl-sphing-4-enine + CoA + H(+). The enzyme catalyses sphinga-(4E,8Z)-dienine + tetracosanoyl-CoA = N-tetracosanoylsphinga-(4E,8Z)-dienine + CoA + H(+). It carries out the reaction sphinga-(4E,8E)-dienine + tetracosanoyl-CoA = N-tetracosanoylsphinga-(4E,8E)-dienine + CoA + H(+). The catalysed reaction is (4R)-hydroxysphing-(8Z)-enine + tetracosanoyl-CoA = N-tetracosanoyl-(4R)-hydroxysphing-(8Z)-enine + CoA + H(+). It catalyses the reaction (4R)-hydroxysphing-(8E)-enine + tetracosanoyl-CoA = N-tetracosanoyl-(4R)-hydroxysphing-(8E)-enine + CoA + H(+). The protein operates within sphingolipid metabolism. With respect to regulation, inhibited by the mycotoxin fumonisin B(1), a sphingosine analog mycotoxins produced by pathogenic fungi. Repressed by divalent cation such as magnesium Mg(2+), copper Cu(2+), zinc Zn(2+), manganese Mn(2+), calcium Ca(2+) and cobalt Co(2+). Functionally, essential for plant growth, promotes cell division in root meristems. Catalyzes the biosynthesis of ceramide sphingolipids with C(16) to C(28) fatty acids, structural membrane lipids involved in membrane trafficking (e.g. early endosomes) and cell polarity (e.g. polar auxin transport related proteins); active on a broad substrate spectrum, both regarding chain lengths of fatty acids and the sphingoid base, such as long-chain base (LCB) phytosphingosine (t18:0). Mediates resistance to sphinganine-analog mycotoxins (SAMs, e.g. fumonisin B(1)) by restoring the sphingolipid biosynthesis. Could salvage the transport of GPI-anchored proteins from the endoplasmic reticulum to the Golgi apparatus in ceramides-depleted cells after SAM exposure. Contributes to hypoxic conditions tolerance (e.g. submergences), especially in the dark, by promoting the formation of very-long-chain (VLC) ceramide species (22:1, 24:1 and 26:1) and of VLC unsaturated ceramides, which are modulating CTR1-mediated ethylene signaling leading to endoplasmic reticulum (ER)-to-nucleus translocation of EIN2 and EIN3. The sequence is that of Ceramide synthase 1 LOH3 from Arabidopsis thaliana (Mouse-ear cress).